The following is a 606-amino-acid chain: Flagellar WD repeat-containing protein Pf20 (606 aa).

A disordered region spans residues 229-250 (PLPGAERSLGGQSTAAAGGGAS). WD repeat units lie at residues 324 to 354 (GHLL…KMWH), 366 to 396 (GHKD…KIWD), 408 to 438 (DHKQ…RLWD), 450 to 480 (GHVD…SVWD), 492 to 522 (GHQN…KLWD), 534 to 564 (TGKH…KAYS), and 576 to 606 (GHED…RLWS).

As to quaternary structure, inter-microtubule bridges in flagella.

Its subcellular location is the cell projection. It localises to the cilium. The protein resides in the flagellum. The protein is Flagellar WD repeat-containing protein Pf20 (PF20) of Chlamydomonas reinhardtii (Chlamydomonas smithii).